Consider the following 112-residue polypeptide: Putative pterin-4-alpha-carbinolamine dehydratase (112 aa).

It belongs to the pterin-4-alpha-carbinolamine dehydratase family.

It catalyses the reaction (4aS,6R)-4a-hydroxy-L-erythro-5,6,7,8-tetrahydrobiopterin = (6R)-L-erythro-6,7-dihydrobiopterin + H2O. The protein is Putative pterin-4-alpha-carbinolamine dehydratase of Shewanella baltica (strain OS155 / ATCC BAA-1091).